Consider the following 264-residue polypeptide: Phosphonoacetaldehyde hydrolase (264 aa).

Catalysis depends on Asp9, which acts as the Nucleophile. Residues Asp9 and Ala11 each contribute to the Mg(2+) site. The active-site Schiff-base intermediate with substrate is Lys50. Residue Asp183 coordinates Mg(2+).

The protein belongs to the HAD-like hydrolase superfamily. PhnX family. As to quaternary structure, homodimer. Requires Mg(2+) as cofactor.

It carries out the reaction phosphonoacetaldehyde + H2O = acetaldehyde + phosphate + H(+). Functionally, involved in phosphonate degradation. The chain is Phosphonoacetaldehyde hydrolase from Bacillus cereus (strain AH820).